The chain runs to 510 residues: NAD(P)H-quinone oxidoreductase subunit 2 B, chloroplastic (510 aa).

13 helical membrane-spanning segments follow: residues 24–44, 57–77, 99–119, 124–144, 149–169, 183–203, 227–247, 295–315, 323–343, 354–374, 395–415, 428–448, and 484–504; these read LLLF…GLIL, LPWF…ALLF, IFQF…VEYI, MAIT…MFLC, LITI…LSGY, YLLM…WLYG, PGIS…LSPA, WHLL…IIAI, MLAY…IVGD, YMLF…LFGL, ALSL…AGFF, GLYS…YYYL, and MIVC…IIAI.

Belongs to the complex I subunit 2 family. As to quaternary structure, NDH is composed of at least 16 different subunits, 5 of which are encoded in the nucleus.

It localises to the plastid. Its subcellular location is the chloroplast thylakoid membrane. It carries out the reaction a plastoquinone + NADH + (n+1) H(+)(in) = a plastoquinol + NAD(+) + n H(+)(out). It catalyses the reaction a plastoquinone + NADPH + (n+1) H(+)(in) = a plastoquinol + NADP(+) + n H(+)(out). In terms of biological role, NDH shuttles electrons from NAD(P)H:plastoquinone, via FMN and iron-sulfur (Fe-S) centers, to quinones in the photosynthetic chain and possibly in a chloroplast respiratory chain. The immediate electron acceptor for the enzyme in this species is believed to be plastoquinone. Couples the redox reaction to proton translocation, and thus conserves the redox energy in a proton gradient. In Jasminum nudiflorum (Winter jasmine), this protein is NAD(P)H-quinone oxidoreductase subunit 2 B, chloroplastic.